Consider the following 177-residue polypeptide: Cyclic pyranopterin monophosphate synthase (177 aa).

Substrate is bound by residues 89 to 91 (LCH) and 125 to 126 (ME). The active site involves D140.

It belongs to the MoaC family. In terms of assembly, homohexamer; trimer of dimers.

It carries out the reaction (8S)-3',8-cyclo-7,8-dihydroguanosine 5'-triphosphate = cyclic pyranopterin phosphate + diphosphate. The protein operates within cofactor biosynthesis; molybdopterin biosynthesis. Its function is as follows. Catalyzes the conversion of (8S)-3',8-cyclo-7,8-dihydroguanosine 5'-triphosphate to cyclic pyranopterin monophosphate (cPMP). The protein is Cyclic pyranopterin monophosphate synthase of Streptomyces griseus subsp. griseus (strain JCM 4626 / CBS 651.72 / NBRC 13350 / KCC S-0626 / ISP 5235).